The chain runs to 234 residues: Protein SSP120 (234 aa).

Residues 1-22 form the signal peptide; that stretch reads MRFLRGFVFSLAFTLYKVTATA. EF-hand domains lie at 52-87 and 108-143; these read LKDY…NREE and MAKR…GNKF. Residue T212 is modified to Phosphothreonine.

The chain is Protein SSP120 (SSP120) from Saccharomyces cerevisiae (strain ATCC 204508 / S288c) (Baker's yeast).